A 344-amino-acid chain; its full sequence is Arginine N-succinyltransferase (344 aa).

L125 contacts succinyl-CoA. The active-site Proton donor is H229.

It belongs to the arginine N-succinyltransferase family.

The enzyme catalyses succinyl-CoA + L-arginine = N(2)-succinyl-L-arginine + CoA + H(+). It functions in the pathway amino-acid degradation; L-arginine degradation via AST pathway; L-glutamate and succinate from L-arginine: step 1/5. Functionally, catalyzes the transfer of succinyl-CoA to arginine to produce N(2)-succinylarginine. The chain is Arginine N-succinyltransferase from Shigella flexneri serotype 5b (strain 8401).